A 159-amino-acid polypeptide reads, in one-letter code: Peptide deformylase (159 aa).

Cysteine 88 and histidine 130 together coordinate Fe cation. Residue glutamate 131 is part of the active site. Histidine 134 contributes to the Fe cation binding site.

The protein belongs to the polypeptide deformylase family. Fe(2+) serves as cofactor.

It catalyses the reaction N-terminal N-formyl-L-methionyl-[peptide] + H2O = N-terminal L-methionyl-[peptide] + formate. Functionally, removes the formyl group from the N-terminal Met of newly synthesized proteins. Requires at least a dipeptide for an efficient rate of reaction. N-terminal L-methionine is a prerequisite for activity but the enzyme has broad specificity at other positions. The polypeptide is Peptide deformylase (Caldanaerobacter subterraneus subsp. tengcongensis (strain DSM 15242 / JCM 11007 / NBRC 100824 / MB4) (Thermoanaerobacter tengcongensis)).